Consider the following 272-residue polypeptide: Shikimate dehydrogenase (NADP(+)) (272 aa).

Residues 14–16 (SKS) and Thr-61 contribute to the shikimate site. Lys-65 serves as the catalytic Proton acceptor. Glu-77 lines the NADP(+) pocket. Shikimate contacts are provided by Asn-86 and Asp-102. Residues 126–130 (GAGGA), 149–154 (NRTVSR), and Met-213 each bind NADP(+). Residue Tyr-215 coordinates shikimate. Gly-237 lines the NADP(+) pocket.

This sequence belongs to the shikimate dehydrogenase family. In terms of assembly, homodimer.

The enzyme catalyses shikimate + NADP(+) = 3-dehydroshikimate + NADPH + H(+). Its pathway is metabolic intermediate biosynthesis; chorismate biosynthesis; chorismate from D-erythrose 4-phosphate and phosphoenolpyruvate: step 4/7. Involved in the biosynthesis of the chorismate, which leads to the biosynthesis of aromatic amino acids. Catalyzes the reversible NADPH linked reduction of 3-dehydroshikimate (DHSA) to yield shikimate (SA). The protein is Shikimate dehydrogenase (NADP(+)) of Shigella flexneri.